Reading from the N-terminus, the 161-residue chain is Cyclic pyranopterin monophosphate synthase (161 aa).

Substrate is bound by residues 75 to 77 (MCH) and 115 to 116 (ME). The active site involves Asp-130.

It belongs to the MoaC family. Homohexamer; trimer of dimers.

The enzyme catalyses (8S)-3',8-cyclo-7,8-dihydroguanosine 5'-triphosphate = cyclic pyranopterin phosphate + diphosphate. Its pathway is cofactor biosynthesis; molybdopterin biosynthesis. Functionally, catalyzes the conversion of (8S)-3',8-cyclo-7,8-dihydroguanosine 5'-triphosphate to cyclic pyranopterin monophosphate (cPMP). The protein is Cyclic pyranopterin monophosphate synthase of Bacillus mycoides (strain KBAB4) (Bacillus weihenstephanensis).